Consider the following 206-residue polypeptide: Ribosomal RNA small subunit methyltransferase G (206 aa).

Residues G73, L78, 124 to 125 (VE), and R139 contribute to the S-adenosyl-L-methionine site.

It belongs to the methyltransferase superfamily. RNA methyltransferase RsmG family.

It localises to the cytoplasm. It catalyses the reaction guanosine(527) in 16S rRNA + S-adenosyl-L-methionine = N(7)-methylguanosine(527) in 16S rRNA + S-adenosyl-L-homocysteine. In terms of biological role, specifically methylates the N7 position of guanine in position 527 of 16S rRNA. The polypeptide is Ribosomal RNA small subunit methyltransferase G (Idiomarina loihiensis (strain ATCC BAA-735 / DSM 15497 / L2-TR)).